The primary structure comprises 257 residues: RNA polymerase sigma-G factor (257 aa).

The Polymerase core binding signature appears at 66–79 (DLFQVGCIGLIKSI). The H-T-H motif DNA-binding region spans 228–247 (QMEVADEIGISQAQVSRLEK).

Belongs to the sigma-70 factor family.

In terms of biological role, sigma factors are initiation factors that promote the attachment of RNA polymerase to specific initiation sites and are then released. This sigma factor is responsible for the expression of sporulation specific genes. The polypeptide is RNA polymerase sigma-G factor (sigG) (Clostridium acetobutylicum (strain ATCC 824 / DSM 792 / JCM 1419 / IAM 19013 / LMG 5710 / NBRC 13948 / NRRL B-527 / VKM B-1787 / 2291 / W)).